The chain runs to 173 residues: Co-chaperone protein HscB homolog (173 aa).

In terms of domain architecture, J spans 5-77 (SHFALFDLEP…SQRARYLLSL (73 aa)).

Belongs to the HscB family. As to quaternary structure, interacts with HscA and stimulates its ATPase activity.

Functionally, co-chaperone involved in the maturation of iron-sulfur cluster-containing proteins. Seems to help targeting proteins to be folded toward HscA. The chain is Co-chaperone protein HscB homolog from Azotobacter vinelandii (strain DJ / ATCC BAA-1303).